The following is a 24-amino-acid chain: Caerin-2.1 (24 aa).

The protein belongs to the frog skin active peptide (FSAP) family. Caerin subfamily. Expressed by the skin dorsal glands.

It is found in the secreted. Inhibits the formation of NO by neuronal nitric oxide synthase. This is Caerin-2.1 from Litoria rothii (Roth's tree frog).